Consider the following 90-residue polypeptide: Probable Fe(2+)-trafficking protein (90 aa).

It belongs to the Fe(2+)-trafficking protein family.

Could be a mediator in iron transactions between iron acquisition and iron-requiring processes, such as synthesis and/or repair of Fe-S clusters in biosynthetic enzymes. This Nitrosospira multiformis (strain ATCC 25196 / NCIMB 11849 / C 71) protein is Probable Fe(2+)-trafficking protein.